The following is a 508-amino-acid chain: Protein disulfide-isomerase (508 aa).

The first 17 residues, 1–17, serve as a signal peptide directing secretion; that stretch reads MLRRALLCLAVAALVRA. In terms of domain architecture, Thioredoxin 1 spans 18 to 134; the sequence is DAPEEEDHVL…IVNWLKKRTG (117 aa). Active-site nucleophile residues include Cys53 and Cys56. Cysteines 53 and 56 form a disulfide. Lys200 is subject to N6-acetyllysine. N6-succinyllysine is present on residues Lys222 and Lys271. Ser331 carries the phosphoserine modification. A Thioredoxin 2 domain is found at 349-475; sequence GKIKPHLMSQ…FKKFLESGGQ (127 aa). Position 357 is a phosphoserine; by FAM20C (Ser357). Catalysis depends on nucleophile residues Cys397 and Cys400. A disulfide bridge connects residues Cys397 and Cys400. Ser427 bears the Phosphoserine mark. A disordered region spans residues 471–508; sequence ESGGQDGAGDDDDLEDLEEAEEPDMEEDDDQKAVKDEL. Acidic residues predominate over residues 478–500; the sequence is AGDDDDLEDLEEAEEPDMEEDDD. The Prevents secretion from ER motif lies at 505 to 508; sequence KDEL.

It belongs to the protein disulfide isomerase family. In terms of assembly, heterodimer; heterodimerizes with the protein microsomal triglyceride transfer MTTP. Homodimer. Monomers and homotetramers may also occur. Interacts with P4HA2, forming a heterotetramer consisting of 2 alpha subunits (P4HA2) and 2 beta (P4HB), where P4HB plays the role of a structural subunit; this tetramer catalyzes the formation of 4-hydroxyproline in collagen. Also constitutes the structural subunit of the microsomal triacylglycerol transfer protein MTTP in mammalian cells. Stabilizes both enzymes and retain them in the ER without contributing to the catalytic activity. Binds UBQLN1. Interacts with ERO1B. Binds to CD4, and upon HIV-1 binding to the cell membrane, is part of a P4HB/PDI-CD4-CXCR4-gp120 complex. Interacts with ILDR2. Interacts with ERN1/IRE1A (via N-terminus); the interaction is enhanced by phosphorylation of P4HB by FAM20C in response to endoplasmic reticulum stress and results in attenuation of ERN1 activity. Phosphorylation of Ser-357 by FAM20C is induced by endoplasmic reticulum stress and results in a functional switch from oxidoreductase to molecular chaperone. It also promotes interaction with ERN1.

The protein localises to the endoplasmic reticulum. It localises to the endoplasmic reticulum lumen. The protein resides in the melanosome. It is found in the cell membrane. The enzyme catalyses Catalyzes the rearrangement of -S-S- bonds in proteins.. This multifunctional protein catalyzes the formation, breakage and rearrangement of disulfide bonds. At the cell surface, seems to act as a reductase that cleaves disulfide bonds of proteins attached to the cell. May therefore cause structural modifications of exofacial proteins. Inside the cell, seems to form/rearrange disulfide bonds of nascent proteins. At high concentrations and following phosphorylation by FAM20C, functions as a chaperone that inhibits aggregation of misfolded proteins. At low concentrations, facilitates aggregation (anti-chaperone activity). May be involved with other chaperones in the structural modification of the TG precursor in hormone biogenesis. Also acts as a structural subunit of various enzymes such as prolyl 4-hydroxylase and microsomal triacylglycerol transfer protein MTTP. Receptor for LGALS9; the interaction retains P4HB at the cell surface of Th2 T helper cells, increasing disulfide reductase activity at the plasma membrane, altering the plasma membrane redox state and enhancing cell migration. The polypeptide is Protein disulfide-isomerase (P4HB) (Homo sapiens (Human)).